A 382-amino-acid polypeptide reads, in one-letter code: Diphosphomevalonate decarboxylase ERG19 (382 aa).

(R)-5-diphosphomevalonate contacts are provided by residues 22 to 25 (YWGK), R78, 157 to 162 (SGSACR), and T213.

This sequence belongs to the diphosphomevalonate decarboxylase family. Homodimer.

It carries out the reaction (R)-5-diphosphomevalonate + ATP = isopentenyl diphosphate + ADP + phosphate + CO2. It functions in the pathway isoprenoid biosynthesis; isopentenyl diphosphate biosynthesis via mevalonate pathway; isopentenyl diphosphate from (R)-mevalonate: step 3/3. In terms of biological role, diphosphomevalonate decarboxylase; part of the second module of ergosterol biosynthesis pathway that includes the middle steps of the pathway. MVD1 converts diphosphomevalonate into isopentenyl diphosphate. The second module is carried out in the vacuole and involves the formation of farnesyl diphosphate, which is also an important intermediate in the biosynthesis of ubiquinone, dolichol, heme and prenylated proteins. Activity by the mevalonate kinase ERG12 (FG05912) first converts mevalonate into 5-phosphomevalonate. 5-phosphomevalonate is then further converted to 5-diphosphomevalonate by the phosphomevalonate kinase ERG8 (FG09764). The diphosphomevalonate decarboxylase ERG19 (FG10424) then produces isopentenyl diphosphate. The isopentenyl-diphosphate delta-isomerase IDI1 (FG09722) then catalyzes the 1,3-allylic rearrangement of the homoallylic substrate isopentenyl (IPP) to its highly electrophilic allylic isomer, dimethylallyl diphosphate (DMAPP). Finally the farnesyl diphosphate synthase ERG20 (FG06784) catalyzes the sequential condensation of isopentenyl pyrophosphate with dimethylallyl pyrophosphate, and then with the resultant geranylpyrophosphate to the ultimate product farnesyl pyrophosphate. The protein is Diphosphomevalonate decarboxylase ERG19 of Gibberella zeae (strain ATCC MYA-4620 / CBS 123657 / FGSC 9075 / NRRL 31084 / PH-1) (Wheat head blight fungus).